The primary structure comprises 516 residues: Ribonuclease Y (516 aa).

The chain crosses the membrane as a helical span at residues 1–21 (MLIKIVIACVITAIIVALIAW). The KH domain maps to 206–269 (TISVVQLPND…ETARIALEKL (64 aa)). Residues 332–425 (ALKHSIEVAI…VQAADTISAA (94 aa)) enclose the HD domain.

It belongs to the RNase Y family.

It is found in the cell membrane. Endoribonuclease that initiates mRNA decay. The chain is Ribonuclease Y from Lachnoclostridium phytofermentans (strain ATCC 700394 / DSM 18823 / ISDg) (Clostridium phytofermentans).